A 317-amino-acid polypeptide reads, in one-letter code: MEYLDFELPIKELEEQLEKCVIIGKESDVDVTPTCKEINKKLEQTKKDIYKNLTAWQRVQLSRHPNRPYTLDYIKAICGDTFLELHGDRGFKDDKAMVGGLGKINGQSFMIVGQQKGYNTKTRQYRNFGMANPEGYRKALRLMKMAEKFGIPVLTLVDTPGAYPGLEAEERGQGEAIARNIFEMVRLQVPIITIIVGEGASGGALGIGVGDRVYMLENTWYSVISPESCSSILWKSWEYKERAAEALKLTSSDMKKQKLVDDVIPEPLGGAHYDRETTFKTVADYITKGYNELKDLSTADLIAQRMDKYSNMGEYKE.

Residues 37–292 (EINKKLEQTK…ADYITKGYNE (256 aa)) form the CoA carboxyltransferase C-terminal domain.

It belongs to the AccA family. Acetyl-CoA carboxylase is a heterohexamer composed of biotin carboxyl carrier protein (AccB), biotin carboxylase (AccC) and two subunits each of ACCase subunit alpha (AccA) and ACCase subunit beta (AccD).

It localises to the cytoplasm. It carries out the reaction N(6)-carboxybiotinyl-L-lysyl-[protein] + acetyl-CoA = N(6)-biotinyl-L-lysyl-[protein] + malonyl-CoA. Its pathway is lipid metabolism; malonyl-CoA biosynthesis; malonyl-CoA from acetyl-CoA: step 1/1. In terms of biological role, component of the acetyl coenzyme A carboxylase (ACC) complex. First, biotin carboxylase catalyzes the carboxylation of biotin on its carrier protein (BCCP) and then the CO(2) group is transferred by the carboxyltransferase to acetyl-CoA to form malonyl-CoA. This chain is Acetyl-coenzyme A carboxylase carboxyl transferase subunit alpha, found in Flavobacterium johnsoniae (strain ATCC 17061 / DSM 2064 / JCM 8514 / BCRC 14874 / CCUG 350202 / NBRC 14942 / NCIMB 11054 / UW101) (Cytophaga johnsonae).